The sequence spans 457 residues: tRNA-2-methylthio-N(6)-dimethylallyladenosine synthase (457 aa).

An MTTase N-terminal domain is found at 19–134 (RKLFIETYGC…LPNLVGAVEH (116 aa)). Residues cysteine 28, cysteine 64, cysteine 98, cysteine 172, cysteine 176, and cysteine 179 each coordinate [4Fe-4S] cluster. The Radical SAM core domain occupies 158-390 (PGVHISGFVS…IDLQNKLSEE (233 aa)). Positions 393–456 (LRDIGKTFEV…SATLFGEPVE (64 aa)) constitute a TRAM domain.

This sequence belongs to the methylthiotransferase family. MiaB subfamily. As to quaternary structure, monomer. The cofactor is [4Fe-4S] cluster.

The protein localises to the cytoplasm. It catalyses the reaction N(6)-dimethylallyladenosine(37) in tRNA + (sulfur carrier)-SH + AH2 + 2 S-adenosyl-L-methionine = 2-methylsulfanyl-N(6)-dimethylallyladenosine(37) in tRNA + (sulfur carrier)-H + 5'-deoxyadenosine + L-methionine + A + S-adenosyl-L-homocysteine + 2 H(+). Catalyzes the methylthiolation of N6-(dimethylallyl)adenosine (i(6)A), leading to the formation of 2-methylthio-N6-(dimethylallyl)adenosine (ms(2)i(6)A) at position 37 in tRNAs that read codons beginning with uridine. The sequence is that of tRNA-2-methylthio-N(6)-dimethylallyladenosine synthase from Parabacteroides distasonis (strain ATCC 8503 / DSM 20701 / CIP 104284 / JCM 5825 / NCTC 11152).